The sequence spans 739 residues: Phosphoribosylformylglycinamidine synthase subunit PurL (739 aa).

Residue His54 is part of the active site. ATP contacts are provided by Tyr57 and Lys96. Residue Glu98 coordinates Mg(2+). Substrate contacts are provided by residues 99–102 (SHNH) and Arg121. His100 functions as the Proton acceptor in the catalytic mechanism. Residue Asp122 participates in Mg(2+) binding. Gln245 lines the substrate pocket. Position 273 (Asp273) interacts with Mg(2+). 317–319 (ESQ) lines the substrate pocket. ATP is bound by residues Asp500 and Gly537. Asn538 is a binding site for Mg(2+). Substrate is bound at residue Ser540.

Belongs to the FGAMS family. As to quaternary structure, monomer. Part of the FGAM synthase complex composed of 1 PurL, 1 PurQ and 2 PurS subunits.

The protein resides in the cytoplasm. The catalysed reaction is N(2)-formyl-N(1)-(5-phospho-beta-D-ribosyl)glycinamide + L-glutamine + ATP + H2O = 2-formamido-N(1)-(5-O-phospho-beta-D-ribosyl)acetamidine + L-glutamate + ADP + phosphate + H(+). It functions in the pathway purine metabolism; IMP biosynthesis via de novo pathway; 5-amino-1-(5-phospho-D-ribosyl)imidazole from N(2)-formyl-N(1)-(5-phospho-D-ribosyl)glycinamide: step 1/2. Functionally, part of the phosphoribosylformylglycinamidine synthase complex involved in the purines biosynthetic pathway. Catalyzes the ATP-dependent conversion of formylglycinamide ribonucleotide (FGAR) and glutamine to yield formylglycinamidine ribonucleotide (FGAM) and glutamate. The FGAM synthase complex is composed of three subunits. PurQ produces an ammonia molecule by converting glutamine to glutamate. PurL transfers the ammonia molecule to FGAR to form FGAM in an ATP-dependent manner. PurS interacts with PurQ and PurL and is thought to assist in the transfer of the ammonia molecule from PurQ to PurL. The chain is Phosphoribosylformylglycinamidine synthase subunit PurL from Bacillus cereus (strain G9842).